Consider the following 575-residue polypeptide: GBF-interacting protein 1-like (575 aa).

Disordered stretches follow at residues 66–171 (SKRE…SKSD) and 229–296 (SSSN…VVHS). Composition is skewed to polar residues over residues 90–102 (FASS…SGRN), 115–138 (TRGS…NETK), and 161–171 (ISASRCSSKSD). Positions 268 to 281 (AREETSTVSEDKDY) are enriched in basic and acidic residues.

The protein belongs to the GIP1 family. In terms of tissue distribution, expressed in roots, leaves, stems and flowers.

It is found in the nucleus. Its function is as follows. May act as a transcriptional coactivator of LOB domain-containing proteins. The polypeptide is GBF-interacting protein 1-like (Arabidopsis thaliana (Mouse-ear cress)).